Consider the following 814-residue polypeptide: Spore development regulator umv1 (814 aa).

Disordered stretches follow at residues 1–36 (MSRP…GSTE), 96–134 (HDRP…VRRG), 267–333 (QGLK…MPRS), 407–441 (PPRD…RAGP), 457–501 (PVRS…ASLT), and 539–814 (QSSG…NQPY). Polar residues predominate over residues 7-18 (RSGNASTPQGTS). The Velvet domain maps to 53-274 (RDHIEYQLTV…AEQGLKVRVR (222 aa)). Positions 271–285 (VRVRKHPRSRRRGSK) are enriched in basic residues. Over residues 407 to 423 (PPRDFADGRYMDGDYPP) the composition is skewed to basic and acidic residues. A Nuclear localization signal motif is present at residues 438–445 (RAGPSEYS). A compositionally biased stretch (low complexity) spans 620 to 631 (AAARRSPIPSAR). Composition is skewed to basic and acidic residues over residues 723-741 (TRDR…DRDQ) and 760-796 (GELD…RRDF). Residues 800-814 (TMPSKPSSRGHNQPY) show a composition bias toward polar residues.

The protein belongs to the velvet family. VosA subfamily. In terms of assembly, forms a heterodimeric complex with velB; the formation of the VEL2-VOS1 complex is light-dependent.

The protein resides in the nucleus. Component of the velB-VosA heterodimeric complex that plays a dual role in activating genes associated with spore maturation and repressing certain development-associated genes. The complex binds DNA through the DNA-binding domain of vosA that recognizes an 11-nucleotide consensus sequence 5'-CTGGCCGCGGC-3' consisting of two motifs in the promoters of key developmental regulatory genes. Required for gall induction and teliospore formation on seedlings. This Mycosarcoma maydis (Corn smut fungus) protein is Spore development regulator umv1.